A 304-amino-acid chain; its full sequence is Tetrahydromethanopterin S-methyltransferase subunit E (304 aa).

A run of 6 helical transmembrane segments spans residues 3–23 (PLIGMGVLALIGVAATIAGAS), 86–106 (PLFALVLGALIAACVHGTFAV), 131–151 (HTPVIMGYSFITTFCILVVSY), 152–172 (LMTVVLGHPFPLTMLAFIWGI), 233–253 (PVTGMAFGMTVFLGSWVTTVF), and 263–283 (WISVVAGVIIVLILIFWNWKI).

It belongs to the MtrE family. As to quaternary structure, the complex is composed of 8 subunits; MtrA, MtrB, MtrC, MtrD, MtrE, MtrF, MtrG and MtrH.

The protein resides in the cell membrane. The catalysed reaction is 5-methyl-5,6,7,8-tetrahydromethanopterin + coenzyme M + 2 Na(+)(in) = 5,6,7,8-tetrahydromethanopterin + methyl-coenzyme M + 2 Na(+)(out). It participates in one-carbon metabolism; methanogenesis from CO(2); methyl-coenzyme M from 5,10-methylene-5,6,7,8-tetrahydromethanopterin: step 2/2. Its function is as follows. Part of a complex that catalyzes the formation of methyl-coenzyme M and tetrahydromethanopterin from coenzyme M and methyl-tetrahydromethanopterin. This is an energy-conserving, sodium-ion translocating step. In Methanosarcina acetivorans (strain ATCC 35395 / DSM 2834 / JCM 12185 / C2A), this protein is Tetrahydromethanopterin S-methyltransferase subunit E.